The sequence spans 716 residues: Fatty acid oxidation complex subunit alpha (716 aa).

The interval 1 to 189 is enoyl-CoA hydratase/isomerase; that stretch reads MIYQSPTIQV…KVGAIDAVVA (189 aa). Residue Asp-296 participates in substrate binding. The tract at residues 311-716 is 3-hydroxyacyl-CoA dehydrogenase; the sequence is KDVNQAAVLG…AANNGSYYQA (406 aa). Residues Met-324, Asp-343, 400 to 402, Lys-407, and Ser-429 each bind NAD(+); that span reads VVE. His-450 serves as the catalytic For 3-hydroxyacyl-CoA dehydrogenase activity. NAD(+) is bound at residue Asn-453. Substrate is bound by residues Asn-500 and Tyr-660.

It in the N-terminal section; belongs to the enoyl-CoA hydratase/isomerase family. In the C-terminal section; belongs to the 3-hydroxyacyl-CoA dehydrogenase family. Heterotetramer of two alpha chains (FadB) and two beta chains (FadA).

It catalyses the reaction a (3S)-3-hydroxyacyl-CoA + NAD(+) = a 3-oxoacyl-CoA + NADH + H(+). It carries out the reaction a (3S)-3-hydroxyacyl-CoA = a (2E)-enoyl-CoA + H2O. The catalysed reaction is a 4-saturated-(3S)-3-hydroxyacyl-CoA = a (3E)-enoyl-CoA + H2O. The enzyme catalyses (3S)-3-hydroxybutanoyl-CoA = (3R)-3-hydroxybutanoyl-CoA. It catalyses the reaction a (3Z)-enoyl-CoA = a 4-saturated (2E)-enoyl-CoA. It carries out the reaction a (3E)-enoyl-CoA = a 4-saturated (2E)-enoyl-CoA. The protein operates within lipid metabolism; fatty acid beta-oxidation. In terms of biological role, involved in the aerobic and anaerobic degradation of long-chain fatty acids via beta-oxidation cycle. Catalyzes the formation of 3-oxoacyl-CoA from enoyl-CoA via L-3-hydroxyacyl-CoA. It can also use D-3-hydroxyacyl-CoA and cis-3-enoyl-CoA as substrate. This is Fatty acid oxidation complex subunit alpha from Shewanella frigidimarina (strain NCIMB 400).